The sequence spans 125 residues: Ribosome-binding factor A (125 aa).

Belongs to the RbfA family. In terms of assembly, monomer. Binds 30S ribosomal subunits, but not 50S ribosomal subunits or 70S ribosomes.

It localises to the cytoplasm. In terms of biological role, one of several proteins that assist in the late maturation steps of the functional core of the 30S ribosomal subunit. Associates with free 30S ribosomal subunits (but not with 30S subunits that are part of 70S ribosomes or polysomes). Required for efficient processing of 16S rRNA. May interact with the 5'-terminal helix region of 16S rRNA. In Paracidovorax citrulli (strain AAC00-1) (Acidovorax citrulli), this protein is Ribosome-binding factor A.